A 94-amino-acid polypeptide reads, in one-letter code: Co-chaperonin GroES (94 aa).

This sequence belongs to the GroES chaperonin family. As to quaternary structure, heptamer of 7 subunits arranged in a ring. Interacts with the chaperonin GroEL.

It is found in the cytoplasm. In terms of biological role, together with the chaperonin GroEL, plays an essential role in assisting protein folding. The GroEL-GroES system forms a nano-cage that allows encapsulation of the non-native substrate proteins and provides a physical environment optimized to promote and accelerate protein folding. GroES binds to the apical surface of the GroEL ring, thereby capping the opening of the GroEL channel. This is Co-chaperonin GroES from Streptococcus agalactiae serotype III (strain NEM316).